Consider the following 233-residue polypeptide: MLIVLSLGGSILAKNLDSDRFLKYANVLRDISKKHTLLVITGGGEAARNYIGAARAMGADEVTCDYIGIDITRLNARLLIAALGPDGYPEIPTNYLEASKAINSGKVVVMGGVTPGQTTDAVAAILAEYLRADLLTIATSIDGVYSSDPNCDPSAVKYDKISPEKLINIVMAIEMKAGSKSPVDPVAAKIIERCKLDALVMDARDPSLLGEILGEEVAKKSPVSCGTWITARK.

Residue 9–10 (GS) coordinates ATP. G43 contacts UMP. G44 and R48 together coordinate ATP. UMP contacts are provided by residues D65 and 113–119 (VTPGQTT). The ATP site is built by T139, Y145, and D148.

The protein belongs to the UMP kinase family. As to quaternary structure, homohexamer.

It is found in the cytoplasm. The enzyme catalyses UMP + ATP = UDP + ADP. It participates in pyrimidine metabolism; CTP biosynthesis via de novo pathway; UDP from UMP (UMPK route): step 1/1. Its activity is regulated as follows. Inhibited by UTP. Catalyzes the reversible phosphorylation of UMP to UDP. The polypeptide is Uridylate kinase (Methanosarcina acetivorans (strain ATCC 35395 / DSM 2834 / JCM 12185 / C2A)).